Reading from the N-terminus, the 240-residue chain is Purine nucleoside phosphorylase RP494 (240 aa).

Zn(2+) is bound by residues His-60, Cys-96, and His-113.

The protein belongs to the purine nucleoside phosphorylase YfiH/LACC1 family. In terms of assembly, homodimer. The cofactor is Cu(2+). Zn(2+) is required as a cofactor.

It catalyses the reaction adenosine + phosphate = alpha-D-ribose 1-phosphate + adenine. It carries out the reaction S-methyl-5'-thioadenosine + phosphate = 5-(methylsulfanyl)-alpha-D-ribose 1-phosphate + adenine. The enzyme catalyses inosine + phosphate = alpha-D-ribose 1-phosphate + hypoxanthine. The catalysed reaction is adenosine + H2O + H(+) = inosine + NH4(+). In terms of biological role, purine nucleoside enzyme that catalyzes the phosphorolysis of adenosine and inosine nucleosides, yielding D-ribose 1-phosphate and the respective free bases, adenine and hypoxanthine. Also catalyzes the phosphorolysis of S-methyl-5'-thioadenosine into adenine and S-methyl-5-thio-alpha-D-ribose 1-phosphate. Also has adenosine deaminase activity. The protein is Purine nucleoside phosphorylase RP494 of Rickettsia prowazekii (strain Madrid E).